A 131-amino-acid polypeptide reads, in one-letter code: Small ribosomal subunit protein uS8 (131 aa).

The protein belongs to the universal ribosomal protein uS8 family. As to quaternary structure, part of the 30S ribosomal subunit. Contacts proteins S5 and S12.

One of the primary rRNA binding proteins, it binds directly to 16S rRNA central domain where it helps coordinate assembly of the platform of the 30S subunit. This is Small ribosomal subunit protein uS8 from Albidiferax ferrireducens (strain ATCC BAA-621 / DSM 15236 / T118) (Rhodoferax ferrireducens).